Here is a 326-residue protein sequence, read N- to C-terminus: MEGVELKEEWQDEDFPIPLPEDDSIEADTLDGTDPDRQPGSLEVNGNKVRKKLMAPDISLTLDPGEDSLWSDDLDEAGEVDLEGLDTPSENSDEFEWEDDLPKPKTTEVIRKGSITEYTATEEKGDGRRWRMFRIGEQDHRVDMKAIEPYKKVISHGGYYGDGLNAIVVFAVCFMPESGQPNYRYLMDNLFKYVIGTLELLVAENYMIIYLNGATTRRKMPSLGWLRRCYQQIDRRLRKNLKSLIIVHPSWFIRTLLAVTRPFISSKFSQKIRYVFNLAELAELVPMEYVGIPECIKQYEEEKFKKRQKRVDQELNGKQEPPKSEQ.

Residues M1–N47 are disordered. Residues W10–T33 are compositionally biased toward acidic residues. Position 41 is a phosphoserine (S41). T87 is modified (phosphothreonine). Residues S89, S92, and S114 each carry the phosphoserine modification. Residues I147–F304 enclose the CRAL-TRIO domain.

It localises to the cytoplasm. The protein resides in the perinuclear region. In terms of biological role, implicated in the suppression of cell death. Interacts with the BCL-2 and adenovirus E1B 19 kDa proteins. The protein is BCL2/adenovirus E1B 19 kDa protein-interacting protein 2 (Bnip2) of Mus musculus (Mouse).